Consider the following 496-residue polypeptide: Trimethylamine methyltransferase MttB (496 aa).

O331 is a non-standard amino acid (pyrrolysine).

It belongs to the trimethylamine methyltransferase family.

The enzyme catalyses Co(I)-[trimethylamine-specific corrinoid protein] + trimethylamine + H(+) = methyl-Co(III)-[trimethylamine-specific corrinoid protein] + dimethylamine. Functionally, catalyzes the transfer of a methyl group from trimethylamine to the corrinoid cofactor of MttC. The sequence is that of Trimethylamine methyltransferase MttB from Desulfitobacterium hafniense (strain DSM 10664 / DCB-2).